The following is a 587-amino-acid chain: Tripartite motif-containing protein 29 (587 aa).

Residues 1–71 form a disordered region; sequence MEGADACRSN…SGEGKSGLFS (71 aa). 4 positions are modified to phosphoserine: Ser21, Ser28, Ser58, and Ser104. Position 106 is a phosphotyrosine (Tyr106). A B box-type zinc finger spans residues 220-260; the sequence is FEARKCPLHGKTMELFCQTDQTCICYLCMFQEHKNHSTVTV. Zn(2+)-binding residues include Cys225, His228, Cys247, and His252. Residues 259 to 348 are a coiled coil; that stretch reads TVEEAKAEKE…AVDQVKVIVD (90 aa). Position 476 is a phosphothreonine (Thr476). The residue at position 489 (Ser489) is a Phosphoserine.

In terms of assembly, interacts with VIM and HINT1. Interacts with IKBKG/NEMO. Interacts with STING1.

The protein resides in the cytoplasm. Its subcellular location is the lysosome. Plays a crucial role in the regulation of macrophage activation in response to viral or bacterial infections within the respiratory tract. Mechanistically, TRIM29 interacts with IKBKG/NEMO in the lysosome where it induces its 'Lys-48' ubiquitination and subsequent degradation. In turn, the expression of type I interferons and the production of pro-inflammatory cytokines are inhibited. Additionally, induces the 'Lys-48' ubiquitination of STING1 in a similar way, leading to its degradation. This Mus musculus (Mouse) protein is Tripartite motif-containing protein 29 (Trim29).